Reading from the N-terminus, the 1117-residue chain is DNA polymerase (1117 aa).

The disordered stretch occupies residues 591–621; that stretch reads ESSPVASFEEDSEQTSDSSLGEVSSQGSSDG. Residues 606 to 618 show a composition bias toward low complexity; sequence SDSSLGEVSSQGS.

The protein belongs to the DNA polymerase type-B family.

It is found in the host nucleus. The catalysed reaction is DNA(n) + a 2'-deoxyribonucleoside 5'-triphosphate = DNA(n+1) + diphosphate. The sequence is that of DNA polymerase from Cavia porcellus (Guinea pig).